We begin with the raw amino-acid sequence, 557 residues long: ETHYLENE INSENSITIVE 3-like 5 protein (557 aa).

Disordered regions lie at residues 1-23 (MVEV…DLEE) and 61-96 (NLNS…RKKM). Low complexity predominate over residues 64–82 (SVISSPSSSTSASSSSSSS). A coiled-coil region spans residues 270 to 311 (ERVRRLARQSKCLQDKMMAKETDTWSRVLNQEEARLNRLKIS).

It belongs to the EIN3 family.

The protein resides in the nucleus. Putative transcription factor that may be involved in the ethylene response pathway. The polypeptide is ETHYLENE INSENSITIVE 3-like 5 protein (EIL5) (Arabidopsis thaliana (Mouse-ear cress)).